Here is a 97-residue protein sequence, read N- to C-terminus: Small ribosomal subunit protein bS21 (97 aa).

Residues 37–97 (EKPSVRKARE…APASSPTTTA (61 aa)) are disordered. The segment covering 76 to 97 (RAVAPRRPAAAPAPASSPTTTA) has biased composition (low complexity).

This sequence belongs to the bacterial ribosomal protein bS21 family.

The chain is Small ribosomal subunit protein bS21 from Methylobacterium sp. (strain 4-46).